Consider the following 519-residue polypeptide: Apolipoprotein N-acyltransferase (519 aa).

Helical transmembrane passes span 6-26 (APLG…IWIF), 47-67 (LTAI…ITGV), 83-103 (IAAF…FVWL), 126-146 (LFIL…SHSI), 174-194 (LLSA…IDFL), and 206-226 (WHYF…GWLL). In terms of domain architecture, CN hydrolase spans 244 to 482 (IQGNIPNQIK…YEIHAAPIYR (239 aa)). E285 serves as the catalytic Proton acceptor. The active site involves K343. C394 serves as the catalytic Nucleophile. Residues 496–516 (VVFLLLVVSAIAWLYQIVFPL) form a helical membrane-spanning segment.

Belongs to the CN hydrolase family. Apolipoprotein N-acyltransferase subfamily.

The protein localises to the cell inner membrane. The catalysed reaction is N-terminal S-1,2-diacyl-sn-glyceryl-L-cysteinyl-[lipoprotein] + a glycerophospholipid = N-acyl-S-1,2-diacyl-sn-glyceryl-L-cysteinyl-[lipoprotein] + a 2-acyl-sn-glycero-3-phospholipid + H(+). It functions in the pathway protein modification; lipoprotein biosynthesis (N-acyl transfer). Its function is as follows. Catalyzes the phospholipid dependent N-acylation of the N-terminal cysteine of apolipoprotein, the last step in lipoprotein maturation. The chain is Apolipoprotein N-acyltransferase from Synechocystis sp. (strain ATCC 27184 / PCC 6803 / Kazusa).